A 123-amino-acid polypeptide reads, in one-letter code: Large ribosomal subunit protein uL14 (123 aa).

It belongs to the universal ribosomal protein uL14 family. As to quaternary structure, part of the 50S ribosomal subunit. Forms a cluster with proteins L3 and L19. In the 70S ribosome, L14 and L19 interact and together make contacts with the 16S rRNA in bridges B5 and B8.

Its function is as follows. Binds to 23S rRNA. Forms part of two intersubunit bridges in the 70S ribosome. In Aliivibrio salmonicida (strain LFI1238) (Vibrio salmonicida (strain LFI1238)), this protein is Large ribosomal subunit protein uL14.